We begin with the raw amino-acid sequence, 441 residues long: Serine hydroxymethyltransferase (441 aa).

124-126 lines the (6S)-5,6,7,8-tetrahydrofolate pocket; it reads GHI. The residue at position 239 (Lys-239) is an N6-(pyridoxal phosphate)lysine.

Belongs to the SHMT family. Homodimer. Pyridoxal 5'-phosphate serves as cofactor.

The protein localises to the cytoplasm. The protein operates within amino-acid biosynthesis; glycine biosynthesis; glycine from L-serine: step 1/1. Functionally, catalyzes the reversible interconversion of serine and glycine with a modified folate serving as the one-carbon carrier. Also exhibits a pteridine-independent aldolase activity toward beta-hydroxyamino acids, producing glycine and aldehydes, via a retro-aldol mechanism. This is Serine hydroxymethyltransferase from Cenarchaeum symbiosum (strain A).